The following is a 129-amino-acid chain: Protein yippee-like At5g53940 (129 aa).

Residues 12–109 (RSYRCRFCRT…LERGRIVDEI (98 aa)) form the Yippee domain. 4 residues coordinate Zn(2+): C16, C19, C72, and C75.

This sequence belongs to the yippee family.

The polypeptide is Protein yippee-like At5g53940 (Arabidopsis thaliana (Mouse-ear cress)).